We begin with the raw amino-acid sequence, 301 residues long: Protoheme IX farnesyltransferase (301 aa).

The next 9 membrane-spanning stretches (helical) occupy residues 16-36 (VVALIVFTALVGMFLAIPGMP), 41-61 (IQSGALGFLGIWLAAAAAAAI), 93-113 (VFAGVLITLSMTILTLWVNLI), 114-134 (TAVLTFTSLIGYAVIYTVYLK), 141-161 (IVIGGLAGAMPPMLGWAAVTG), 172-192 (SLLVAIIFVWTPPHFWALAIF), 217-237 (QILLYTVILSVVTLLPVATGM), 238-258 (SGVFYLGAALVLDAVFLWYAW), and 273-293 (FGYSIVYLMALFAFLMFDHWL).

This sequence belongs to the UbiA prenyltransferase family. Protoheme IX farnesyltransferase subfamily.

It localises to the cell inner membrane. It catalyses the reaction heme b + (2E,6E)-farnesyl diphosphate + H2O = Fe(II)-heme o + diphosphate. It participates in porphyrin-containing compound metabolism; heme O biosynthesis; heme O from protoheme: step 1/1. In terms of biological role, converts heme B (protoheme IX) to heme O by substitution of the vinyl group on carbon 2 of heme B porphyrin ring with a hydroxyethyl farnesyl side group. The protein is Protoheme IX farnesyltransferase of Xylella fastidiosa (strain Temecula1 / ATCC 700964).